A 656-amino-acid chain; its full sequence is Nexilin (656 aa).

Disordered stretches follow at residues 1 to 131 (MNDV…IEQD), 165 to 198 (RAAANRKDPEDLDREHRNGRVSQEEEKTRHEEEC), and 215 to 284 (TEAK…VFKE). A compositionally biased stretch (low complexity) spans 11 to 26 (LLSSSKPVPKSYVPKL). Over residues 27–78 (GKGDVKDKFEAMQRAREERNQRRSRDEKQRRKEQYIREREWNRRKQEIKDML) the composition is skewed to basic and acidic residues. Ser80 bears the Phosphoserine mark. Basic and acidic residues-rich tracts occupy residues 103–131 (GKFDEMEKHRQEEQRKRTEEERKRRIEQD), 169–198 (NRKDPEDLDREHRNGRVSQEEEKTRHEEEC), and 216–269 (EAKK…RNMV). 4 positions are modified to phosphoserine: Ser221, Ser330, Ser337, and Ser345. Thr350 bears the Phosphothreonine mark. 2 disordered regions span residues 468–492 (NFHEDDDVDVKPAKKSESPFTHKVN) and 529–564 (AALQKKREDDEEEEGSIVNGSTTEDEEQTRSGAPWF). Phosphoserine is present on residues Ser544 and Ser549. At Thr551 the chain carries Phosphothreonine. Residues 562 to 650 (PWFKKPLRNT…GSAASTCILT (89 aa)) enclose the Ig-like domain.

Interacts with F-actin. As to expression, expressed in brain, testis, spleen and fibroblasts (at protein level). Not detected in liver, kidney or epithelial cells (at protein level).

The protein resides in the cytoplasm. It is found in the cytoskeleton. Its subcellular location is the cell junction. It localises to the adherens junction. The protein localises to the myofibril. The protein resides in the sarcomere. It is found in the z line. Its function is as follows. Involved in regulating cell migration through association with the actin cytoskeleton. Has an essential role in the maintenance of Z line and sarcomere integrity. This Rattus norvegicus (Rat) protein is Nexilin.